We begin with the raw amino-acid sequence, 700 residues long: uncharacterized protein (700 aa).

4 residues coordinate [4Fe-4S] cluster: cysteine 307, cysteine 310, cysteine 314, and cysteine 558.

Belongs to the AOR/FOR family. [4Fe-4S] cluster is required as a cofactor. The cofactor is Mo-molybdopterin. It depends on tungstopterin as a cofactor.

This is an uncharacterized protein from Escherichia coli (strain K12).